We begin with the raw amino-acid sequence, 114 residues long: Ribosome-binding factor A (114 aa).

Belongs to the RbfA family. Monomer. Binds 30S ribosomal subunits, but not 50S ribosomal subunits or 70S ribosomes.

The protein localises to the cytoplasm. In terms of biological role, one of several proteins that assist in the late maturation steps of the functional core of the 30S ribosomal subunit. Associates with free 30S ribosomal subunits (but not with 30S subunits that are part of 70S ribosomes or polysomes). Required for efficient processing of 16S rRNA. May interact with the 5'-terminal helix region of 16S rRNA. This is Ribosome-binding factor A from Listeria welshimeri serovar 6b (strain ATCC 35897 / DSM 20650 / CCUG 15529 / CIP 8149 / NCTC 11857 / SLCC 5334 / V8).